Consider the following 115-residue polypeptide: Somatostatin-2 (115 aa).

The first 18 residues, Met1–Ala18, serve as a signal peptide directing secretion. Residues Ile19–Arg87 constitute a propeptide that is removed on maturation. Cys104 and Cys115 are disulfide-bonded.

The protein belongs to the somatostatin family.

Its subcellular location is the secreted. Somatostatin inhibits the release of somatotropin. The polypeptide is Somatostatin-2 (sst2) (Oncorhynchus mykiss (Rainbow trout)).